We begin with the raw amino-acid sequence, 298 residues long: NFU1 iron-sulfur cluster scaffold homolog, mitochondrial (298 aa).

A nifU region spans residues 194-262 (IKELLDTRIR…IPEVESVEQV (69 aa)). [4Fe-4S] cluster-binding residues include cysteine 231 and cysteine 234.

Belongs to the NifU family.

It localises to the mitochondrion. Its function is as follows. Molecular scaffold for [Fe-S] cluster assembly of mitochondrial iron-sulfur proteins. The polypeptide is NFU1 iron-sulfur cluster scaffold homolog, mitochondrial (Drosophila grimshawi (Hawaiian fruit fly)).